The primary structure comprises 226 residues: Ribosomal RNA large subunit methyltransferase E (226 aa).

A disordered region spans residues 1–25 (MVKPPAGGNEGGRGKPARLKTAYGR). Residues G82, W84, D100, D116, and D140 each contribute to the S-adenosyl-L-methionine site. K180 serves as the catalytic Proton acceptor.

Belongs to the class I-like SAM-binding methyltransferase superfamily. RNA methyltransferase RlmE family.

The protein resides in the cytoplasm. The catalysed reaction is uridine(2552) in 23S rRNA + S-adenosyl-L-methionine = 2'-O-methyluridine(2552) in 23S rRNA + S-adenosyl-L-homocysteine + H(+). Functionally, specifically methylates the uridine in position 2552 of 23S rRNA at the 2'-O position of the ribose in the fully assembled 50S ribosomal subunit. The chain is Ribosomal RNA large subunit methyltransferase E from Caulobacter vibrioides (strain ATCC 19089 / CIP 103742 / CB 15) (Caulobacter crescentus).